The following is a 139-amino-acid chain: Large ribosomal subunit protein uL16 (139 aa).

A compositionally biased stretch (basic residues) spans 1 to 20 (MLMPRRVKHRKQHHPTRRGA). The segment at 1–24 (MLMPRRVKHRKQHHPTRRGAAKGG) is disordered.

This sequence belongs to the universal ribosomal protein uL16 family. In terms of assembly, part of the 50S ribosomal subunit.

Functionally, binds 23S rRNA and is also seen to make contacts with the A and possibly P site tRNAs. This Nocardioides sp. (strain ATCC BAA-499 / JS614) protein is Large ribosomal subunit protein uL16.